A 551-amino-acid polypeptide reads, in one-letter code: Eukaryotic translation initiation factor 3 subunit D-2 (551 aa).

Residues 108–152 (RTRGRTGRGTPNIASLGGSTAGGATASSTKYGKGRHTRNTQNVGR) form a disordered region. Over residues 115-136 (RGTPNIASLGGSTAGGATASST) the composition is skewed to low complexity. An RNA gate region spans residues 290–304 (QFDLLTVNETSVEPP). The tract at residues 527-551 (PENAFDSDRDEEEESSEPLSNSNDN) is disordered.

The protein belongs to the eIF-3 subunit D family. Component of the eukaryotic translation initiation factor 3 (eIF-3) complex. The eIF-3 complex interacts with pix.

Its subcellular location is the cytoplasm. Its function is as follows. mRNA cap-binding component of the eukaryotic translation initiation factor 3 (eIF-3) complex, which is involved in protein synthesis of a specialized repertoire of mRNAs and, together with other initiation factors, stimulates binding of mRNA and methionyl-tRNAi to the 40S ribosome. The eIF-3 complex specifically targets and initiates translation of a subset of mRNAs involved in cell proliferation. In the eIF-3 complex, eif3d specifically recognizes and binds the 7-methylguanosine cap of a subset of mRNAs. This Drosophila simulans (Fruit fly) protein is Eukaryotic translation initiation factor 3 subunit D-2.